The sequence spans 423 residues: Tyrosine--tRNA ligase (423 aa).

Tyrosine 35 serves as a coordination point for L-tyrosine. Residues 40–49 (PTAPSLHAGH) carry the 'HIGH' region motif. Residues tyrosine 170 and glutamine 174 each coordinate L-tyrosine. A 'KMSKS' region motif is present at residues 230 to 234 (KFGKS). Lysine 233 serves as a coordination point for ATP. The region spanning 355 to 412 (DLITDLLVATGLSASKGAARRTIAEGGVSVNNVKIDSDEWTPQASDFLHGRWLVLRRG) is the S4 RNA-binding domain.

The protein belongs to the class-I aminoacyl-tRNA synthetase family. TyrS type 1 subfamily. As to quaternary structure, homodimer.

It localises to the cytoplasm. The enzyme catalyses tRNA(Tyr) + L-tyrosine + ATP = L-tyrosyl-tRNA(Tyr) + AMP + diphosphate + H(+). Catalyzes the attachment of tyrosine to tRNA(Tyr) in a two-step reaction: tyrosine is first activated by ATP to form Tyr-AMP and then transferred to the acceptor end of tRNA(Tyr). The protein is Tyrosine--tRNA ligase of Mycobacterium sp. (strain JLS).